A 449-amino-acid polypeptide reads, in one-letter code: Bifunctional protein GlmU (449 aa).

The interval methionine 1–arginine 226 is pyrophosphorylase. UDP-N-acetyl-alpha-D-glucosamine contacts are provided by residues leucine 7 to glycine 10, lysine 21, glutamine 73, and glycine 78 to threonine 79. Aspartate 103 provides a ligand contact to Mg(2+). Residues glycine 140, glutamate 155, asparagine 170, and asparagine 224 each contribute to the UDP-N-acetyl-alpha-D-glucosamine site. Asparagine 224 lines the Mg(2+) pocket. The segment at phenylalanine 227–alanine 247 is linker. The N-acetyltransferase stretch occupies residues glycine 248 to serine 449. Arginine 329 and lysine 347 together coordinate UDP-N-acetyl-alpha-D-glucosamine. Histidine 359 acts as the Proton acceptor in catalysis. Tyrosine 362 and asparagine 373 together coordinate UDP-N-acetyl-alpha-D-glucosamine. Acetyl-CoA is bound by residues alanine 376, asparagine 382–tyrosine 383, alanine 419, and arginine 436.

This sequence in the N-terminal section; belongs to the N-acetylglucosamine-1-phosphate uridyltransferase family. In the C-terminal section; belongs to the transferase hexapeptide repeat family. In terms of assembly, homotrimer. Mg(2+) serves as cofactor.

The protein localises to the cytoplasm. The catalysed reaction is alpha-D-glucosamine 1-phosphate + acetyl-CoA = N-acetyl-alpha-D-glucosamine 1-phosphate + CoA + H(+). It carries out the reaction N-acetyl-alpha-D-glucosamine 1-phosphate + UTP + H(+) = UDP-N-acetyl-alpha-D-glucosamine + diphosphate. The protein operates within nucleotide-sugar biosynthesis; UDP-N-acetyl-alpha-D-glucosamine biosynthesis; N-acetyl-alpha-D-glucosamine 1-phosphate from alpha-D-glucosamine 6-phosphate (route II): step 2/2. It functions in the pathway nucleotide-sugar biosynthesis; UDP-N-acetyl-alpha-D-glucosamine biosynthesis; UDP-N-acetyl-alpha-D-glucosamine from N-acetyl-alpha-D-glucosamine 1-phosphate: step 1/1. It participates in bacterial outer membrane biogenesis; LPS lipid A biosynthesis. Functionally, catalyzes the last two sequential reactions in the de novo biosynthetic pathway for UDP-N-acetylglucosamine (UDP-GlcNAc). The C-terminal domain catalyzes the transfer of acetyl group from acetyl coenzyme A to glucosamine-1-phosphate (GlcN-1-P) to produce N-acetylglucosamine-1-phosphate (GlcNAc-1-P), which is converted into UDP-GlcNAc by the transfer of uridine 5-monophosphate (from uridine 5-triphosphate), a reaction catalyzed by the N-terminal domain. This chain is Bifunctional protein GlmU, found in Picosynechococcus sp. (strain ATCC 27264 / PCC 7002 / PR-6) (Agmenellum quadruplicatum).